The following is a 115-amino-acid chain: Large ribosomal subunit protein bL19 (115 aa).

Belongs to the bacterial ribosomal protein bL19 family.

In terms of biological role, this protein is located at the 30S-50S ribosomal subunit interface and may play a role in the structure and function of the aminoacyl-tRNA binding site. The sequence is that of Large ribosomal subunit protein bL19 from Coxiella burnetii (strain CbuK_Q154) (Coxiella burnetii (strain Q154)).